The sequence spans 67 residues: uncharacterized protein (67 aa).

This is an uncharacterized protein from Rickettsia prowazekii (strain Madrid E).